A 126-amino-acid chain; its full sequence is Hydrogenase maturation factor HypA (126 aa).

Histidine 2 contacts Ni(2+). Zn(2+) contacts are provided by cysteine 78, cysteine 81, cysteine 97, and cysteine 100.

This sequence belongs to the HypA/HybF family.

Functionally, involved in the maturation of [NiFe] hydrogenases. Required for nickel insertion into the metal center of the hydrogenase. The polypeptide is Hydrogenase maturation factor HypA (Methanococcus maripaludis (strain C6 / ATCC BAA-1332)).